The following is a 207-amino-acid chain: Fibroblast growth factor 18 (207 aa).

An N-terminal signal peptide occupies residues 1–27 (MYSAPSACTCLCLHFLLLCFQVQVLVA). N-linked (GlcNAc...) asparagine glycosylation is present at asparagine 39. Cysteine 109 and cysteine 127 are joined by a disulfide. An N-linked (GlcNAc...) asparagine glycan is attached at asparagine 137. The segment at 157–186 (GRPRKGPKTRENQQDVHFMKRYPKGQPELQ) is disordered. Positions 164–174 (KTRENQQDVHF) are enriched in basic and acidic residues.

The protein belongs to the heparin-binding growth factors family. As to quaternary structure, interacts with FGFR3 and FGFR4.

It is found in the secreted. In terms of biological role, plays an important role in the regulation of cell proliferation, cell differentiation and cell migration. Required for normal ossification and bone development. Stimulates hepatic and intestinal proliferation. The chain is Fibroblast growth factor 18 (FGF18) from Homo sapiens (Human).